We begin with the raw amino-acid sequence, 345 residues long: MAEFFNTPGGIAVIILAQTLAVVAFVMISLLFLVYGDRKIWAAVQMRRGPNVVGVYGLLQTVADALKYVVKEVVIPAGSDRTVFILAPLTSFVLAMIAWAVIPFNDTWVLSDINVAILYVFAVSSLEVYGVIMGGWASNSKYPFLGSLRSAAQMISYEVSIGLIIIGVILSTGSMNFGDIVRAQDGDAGLFNWYWLPHFPMVFLFFISCLAETNRPPFDLPEAESELVAGYQVEYSSTPFLLFMAGEYIAIFLMCALTSLLFFGGWLSPVPFLPDSPLWMVAKMAFFFFLFAMVKAITPRYRYDQLMRLGWKVFLPFSLIWVVFVAFAARFEWFWGAFARWSTGG.

8 helical membrane-spanning segments follow: residues 13–33, 84–104, 115–135, 161–181, 190–210, 248–268, 277–297, and 309–329; these read VIIL…LLFL, FILA…VIPF, VAIL…IMGG, IGLI…GDIV, LFNW…ISCL, YIAI…GWLS, PLWM…VKAI, and LGWK…AFAA.

It belongs to the complex I subunit 1 family. As to quaternary structure, NDH-1 is composed of 14 different subunits. Subunits NuoA, H, J, K, L, M, N constitute the membrane sector of the complex.

The protein localises to the cell inner membrane. The catalysed reaction is a quinone + NADH + 5 H(+)(in) = a quinol + NAD(+) + 4 H(+)(out). Functionally, NDH-1 shuttles electrons from NADH, via FMN and iron-sulfur (Fe-S) centers, to quinones in the respiratory chain. The immediate electron acceptor for the enzyme in this species is believed to be ubiquinone. Couples the redox reaction to proton translocation (for every two electrons transferred, four hydrogen ions are translocated across the cytoplasmic membrane), and thus conserves the redox energy in a proton gradient. This subunit may bind ubiquinone. The sequence is that of NADH-quinone oxidoreductase subunit H from Ruegeria sp. (strain TM1040) (Silicibacter sp.).